The chain runs to 222 residues: Protein Thf1 (222 aa).

Residues 169-208 (IEKVKRDLELYRSNLDKINQARSLMKELVEQERKRRAQQT) adopt a coiled-coil conformation. Residues 197–222 (VEQERKRRAQQTSAPPAVDASSDAPA) form a disordered region. Residues 209–222 (SAPPAVDASSDAPA) are compositionally biased toward low complexity.

It belongs to the THF1 family.

May be involved in photosynthetic membrane biogenesis. The protein is Protein Thf1 of Thermosynechococcus vestitus (strain NIES-2133 / IAM M-273 / BP-1).